Here is a 168-residue protein sequence, read N- to C-terminus: Small ribosomal subunit protein bS16 (168 aa).

Positions 110–168 (LSEANNGPTAEAITEKKKKAREEKEAKEAAEKAAAEKAAAAEAEASEEAPAEEAASEEA) are disordered. Residues 129-144 (AREEKEAKEAAEKAAA) are compositionally biased toward basic and acidic residues. The span at 153-168 (EASEEAPAEEAASEEA) shows a compositional bias: acidic residues.

Belongs to the bacterial ribosomal protein bS16 family.

The sequence is that of Small ribosomal subunit protein bS16 from Corynebacterium efficiens (strain DSM 44549 / YS-314 / AJ 12310 / JCM 11189 / NBRC 100395).